The following is a 402-amino-acid chain: NADH-quinone oxidoreductase subunit D (402 aa).

Belongs to the complex I 49 kDa subunit family. As to quaternary structure, NDH-1 is composed of 14 different subunits. Subunits NuoB, C, D, E, F, and G constitute the peripheral sector of the complex.

The protein resides in the cell inner membrane. It carries out the reaction a quinone + NADH + 5 H(+)(in) = a quinol + NAD(+) + 4 H(+)(out). Its function is as follows. NDH-1 shuttles electrons from NADH, via FMN and iron-sulfur (Fe-S) centers, to quinones in the respiratory chain. The immediate electron acceptor for the enzyme in this species is believed to be ubiquinone. Couples the redox reaction to proton translocation (for every two electrons transferred, four hydrogen ions are translocated across the cytoplasmic membrane), and thus conserves the redox energy in a proton gradient. In Cereibacter sphaeroides (strain ATCC 17025 / ATH 2.4.3) (Rhodobacter sphaeroides), this protein is NADH-quinone oxidoreductase subunit D.